Here is a 402-residue protein sequence, read N- to C-terminus: Bisdemethoxycurcumin synthase (402 aa).

C174 (acyl-thioester intermediate) is an active-site residue.

The protein belongs to the thiolase-like superfamily. Chalcone/stilbene synthases family. In terms of assembly, homodimer.

The enzyme catalyses 2 4-coumaroyl-CoA + malonyl-CoA + H2O + H(+) = bisdemethoxycurcumin + 2 CO2 + 3 CoA. It functions in the pathway secondary metabolite biosynthesis; flavonoid biosynthesis. In terms of biological role, plant-specific type III polyketide synthase (PKS) that catalyzes the one-pot formation of the C6-C7-C6 diarylheptanoid scaffold of bisdemethoxycurcumin by the condensation of two molecules of 4-coumaroyl-CoA and one molecule of malonyl-CoA. This is Bisdemethoxycurcumin synthase from Oryza sativa subsp. japonica (Rice).